Reading from the N-terminus, the 153-residue chain is Bacteriohemerythrin (153 aa).

Fe cation is bound by residues H21, H57, E61, H76, H80, H115, and D120.

It belongs to the hemerythrin family. In terms of assembly, monomer.

In terms of biological role, oxygen-binding protein. May be involved in a storage mechanism or for delivery to oxygen-requiring enzymes. The oxygen-binding site contains two iron atoms. This chain is Bacteriohemerythrin, found in Pseudomonas aeruginosa (strain UCBPP-PA14).